The following is a 388-amino-acid chain: tRNA (guanine-N(7)-)-methyltransferase non-catalytic subunit (388 aa).

4 WD repeats span residues 58-102, 112-151, 153-194, and 196-234; these read VEKR…KGDI, VVPK…AIEM, GAIS…DSFF, and GHTE…APRR. The tract at residues 365–388 is disordered; the sequence is EKKKRRLNEDINGDDGEGPGPSNS.

It belongs to the WD repeat TRM82 family. Forms a heterodimer with the catalytic subunit.

Its subcellular location is the nucleus. It participates in tRNA modification; N(7)-methylguanine-tRNA biosynthesis. Its function is as follows. Required for the formation of N(7)-methylguanine at position 46 (m7G46) in tRNA. In the complex, it is required to stabilize and induce conformational changes of the catalytic subunit. This chain is tRNA (guanine-N(7)-)-methyltransferase non-catalytic subunit, found in Caenorhabditis elegans.